The primary structure comprises 119 residues: Large ribosomal subunit protein uL18 (119 aa).

A disordered region spans residues 1 to 25 (MITKIDKNKVRKKRHARVRSKISGT). Residues 9–20 (KVRKKRHARVRS) are compositionally biased toward basic residues.

The protein belongs to the universal ribosomal protein uL18 family. Part of the 50S ribosomal subunit; part of the 5S rRNA/L5/L18/L25 subcomplex. Contacts the 5S and 23S rRNAs.

Its function is as follows. This is one of the proteins that bind and probably mediate the attachment of the 5S RNA into the large ribosomal subunit, where it forms part of the central protuberance. The sequence is that of Large ribosomal subunit protein uL18 from Listeria monocytogenes serotype 4b (strain CLIP80459).